Reading from the N-terminus, the 674-residue chain is DNA ligase (674 aa).

NAD(+)-binding positions include 34–38 (DADFD), 82–83 (SL), and Glu-107. The active-site N6-AMP-lysine intermediate is Lys-109. The NAD(+) site is built by Arg-130, Glu-170, Lys-286, and Lys-310. Zn(2+) contacts are provided by Cys-404, Cys-407, Cys-423, and Cys-429. The BRCT domain occupies 593–674 (KPAQTLEGIT…FTRLLETGEA (82 aa)).

This sequence belongs to the NAD-dependent DNA ligase family. LigA subfamily. Mg(2+) is required as a cofactor. It depends on Mn(2+) as a cofactor.

The enzyme catalyses NAD(+) + (deoxyribonucleotide)n-3'-hydroxyl + 5'-phospho-(deoxyribonucleotide)m = (deoxyribonucleotide)n+m + AMP + beta-nicotinamide D-nucleotide.. Functionally, DNA ligase that catalyzes the formation of phosphodiester linkages between 5'-phosphoryl and 3'-hydroxyl groups in double-stranded DNA using NAD as a coenzyme and as the energy source for the reaction. It is essential for DNA replication and repair of damaged DNA. The sequence is that of DNA ligase from Corynebacterium aurimucosum (strain ATCC 700975 / DSM 44827 / CIP 107346 / CN-1) (Corynebacterium nigricans).